The primary structure comprises 204 residues: MRISVYACFLGLYFLVFSLIVYVILGAEFLVSVLQPGNVARSMLWVLPAYVANASPVVFSRLVRKRWRLHPMDFGLTFVDGQRLLGDNKTFEGFLGGMLSGVLVGILLAYARFVDGVSAFLLPLGALLGDLGGAFVKRRLRIKPGEPAILLDQLDFVAGALILQGLFSKLPAAEVVVAVVLLTPIVHLLTNMAAFVLGLKDVPW.

Helical transmembrane passes span 5–25 (VYACFLGLYFLVFSLIVYVIL), 43–63 (MLWVLPAYVANASPVVFSRLV), 91–111 (FEGFLGGMLSGVLVGILLAYA), 116–136 (GVSAFLLPLGALLGDLGGAFV), 147–167 (PAILLDQLDFVAGALILQGLF), and 175–195 (VVVAVVLLTPIVHLLTNMAAF).

It belongs to the CDP-archaeol synthase family. Requires Mg(2+) as cofactor.

Its subcellular location is the cell membrane. The enzyme catalyses 2,3-bis-O-(geranylgeranyl)-sn-glycerol 1-phosphate + CTP + H(+) = CDP-2,3-bis-O-(geranylgeranyl)-sn-glycerol + diphosphate. It functions in the pathway membrane lipid metabolism; glycerophospholipid metabolism. Functionally, catalyzes the formation of CDP-2,3-bis-(O-geranylgeranyl)-sn-glycerol (CDP-archaeol) from 2,3-bis-(O-geranylgeranyl)-sn-glycerol 1-phosphate (DGGGP) and CTP. This reaction is the third ether-bond-formation step in the biosynthesis of archaeal membrane lipids. In Thermofilum pendens (strain DSM 2475 / Hrk 5), this protein is CDP-archaeol synthase.